A 165-amino-acid chain; its full sequence is Large ribosomal subunit protein uL22c (165 aa).

This sequence belongs to the universal ribosomal protein uL22 family. Part of the 50S ribosomal subunit.

The protein localises to the plastid. Its subcellular location is the chloroplast. This protein binds specifically to 23S rRNA. In terms of biological role, the globular domain of the protein is located near the polypeptide exit tunnel on the outside of the subunit, while an extended beta-hairpin is found that lines the wall of the exit tunnel in the center of the 70S ribosome. The polypeptide is Large ribosomal subunit protein uL22c (rpl22) (Daucus carota (Wild carrot)).